We begin with the raw amino-acid sequence, 527 residues long: Arginine--tRNA ligase (527 aa).

Residues 108 to 118 (ANPTGPLHIGH) carry the 'HIGH' region motif.

The protein belongs to the class-I aminoacyl-tRNA synthetase family. Monomer.

It is found in the cytoplasm. It carries out the reaction tRNA(Arg) + L-arginine + ATP = L-arginyl-tRNA(Arg) + AMP + diphosphate. The polypeptide is Arginine--tRNA ligase (Sulfurimonas denitrificans (strain ATCC 33889 / DSM 1251) (Thiomicrospira denitrificans (strain ATCC 33889 / DSM 1251))).